Here is a 380-residue protein sequence, read N- to C-terminus: GATOR1 complex protein NPRL2 (380 aa).

Residues 1-133 are interaction with PDPK1; that stretch reads MGSSCRIECI…SKQKLVPIMT (133 aa). R78 serves as a coordination point for GDP. An Asymmetric dimethylarginine modification is found at R78. Glycyl lysine isopeptide (Lys-Gly) (interchain with G-Cter in ubiquitin) cross-links involve residues K158 and K357.

This sequence belongs to the NPR2 family. In terms of assembly, within the GATOR complex, component of the GATOR1 subcomplex, made of DEPDC5, NPRL2 and NPRL3. GATOR1 mediates the strong interaction of the GATOR complex with small GTPases Rag (RagA/RRAGA, RagB/RRAGB, RagC/RRAGC and/or RagD/RRAGD) heterodimers. GATOR1 interacts with GPR155/LYCHOS; interaction takes place in presence of cholesterol and prevents interaction between GATOR1 and KICSTOR. Interacts with PDPK1. Post-translationally, in the presence of abundant amino acids, ubiquitinated at Lys-158 and Lys-357 via 'Lys-6'-linked ubiquitination by the WDR24 component of the GATOR2 complex, thereby inhibiting the GATOR1 complex and promoting mTORC1 activation. Asymmetric dimethylation at Arg-78 by PRMT1 inhibits the GTPase activator activity of the GATOR1 complex and consequently inducing timely mTORC1 activation under methionine-sufficient conditions.

The protein resides in the lysosome membrane. Its function is as follows. Catalytic component of the GATOR1 complex, a multiprotein complex that functions as an inhibitor of the amino acid-sensing branch of the mTORC1 pathway. In response to amino acid depletion, the GATOR1 complex has GTPase activating protein (GAP) activity and strongly increases GTP hydrolysis by RagA/RRAGA (or RagB/RRAGB) within heterodimeric Rag complexes, thereby turning them into their inactive GDP-bound form, releasing mTORC1 from lysosomal surface and inhibiting mTORC1 signaling. In the presence of abundant amino acids, the GATOR1 complex is ubiquitinated and inhibited by GATOR2. Within the GATOR1 complex, NPRL2 constitutes the catalytic subunit that mediates the GTPase activator activity and under methionine-sufficient conditions, the GTPase activator activity is inhibited by PRMT1 through methylation and consequently inducing timely mTORC1 activation. Suppresses Src-dependent tyrosine phosphorylation and activation of PDPK1 and its downstream signaling. Down-regulates PDPK1 kinase activity by interfering with tyrosine phosphorylation at 'Tyr-9', 'Tyr-373' and 'Tyr-376' residues. May act as a tumor suppressor. Suppresses cell growth and enhances sensitivity to various anticancer drugs. This Bos taurus (Bovine) protein is GATOR1 complex protein NPRL2.